The primary structure comprises 401 residues: Chalcone synthase 3 (401 aa).

The active site involves Cys-168.

It belongs to the thiolase-like superfamily. Chalcone/stilbene synthases family.

The catalysed reaction is (E)-4-coumaroyl-CoA + 3 malonyl-CoA + 3 H(+) = 2',4,4',6'-tetrahydroxychalcone + 3 CO2 + 4 CoA. Its pathway is secondary metabolite biosynthesis; flavonoid biosynthesis. Functionally, the primary product of this enzyme is 4,2',4',6'-tetrahydroxychalcone (also termed naringenin-chalcone or chalcone) which can under specific conditions spontaneously isomerize into naringenin. The chain is Chalcone synthase 3 (CHS3) from Sorghum bicolor (Sorghum).